We begin with the raw amino-acid sequence, 657 residues long: MDHFFIKRKRNSEVKYTEACSSSSVESGIVNSDNIEKNTDSNLQTSTSFEPHFKKKKVSARRYNEDYLKYGFIKCEKPFENDRPQCVICNNILANESLKPSKLKRHLETQHAELIDKPLEYFQRKKKDIKLSTQFLSCSTAVSEKALLSSYLVAYRVAKEKIANTAAEKIILPACLDMVRTIFDDKSADKLKTIPNDNTVSLRICTIAEHLETMLITRLQSGIDFAIQLDESTDIGSCTTLLVYVRYAWQDDFLEDFLCFLNLTSHLSGLDIFTELERRIVGQYKLNWKNCKGITSDGTATMTGKHSRVIKKLLEVTNNGAVWNHCFIHREGLASREIPQNLMEVLKNAVKVVNFIKGSSLNSRLLETFCSEIGTNHTHLLYHTKIRWLSQGKILSRVYELRNEIHFFLIEKKSHLASIFEDDTWVTKLAYLTDIFSILNELSLKLQGKNSDVFQHVERIQGFRKTLLLWQVRLKSNRPSYYMFPRFLQHIEENIINENILKEIKLEILLHLTSLSQTFNHFFPEEKFETLRENSWVKDPFAFRHPESIIELNLVPEEENELLQLSSSYTLKNDYETLSLSAFWMKVKEDFPLLSRKSVLLLLPFTTTSLCELGFSILTQLKTKERNGLNCAAVMRVALSSCVPDWNELMNRQAHPS.

The protein belongs to the FAM200 family.

The sequence is that of Protein FAM200B from Homo sapiens (Human).